We begin with the raw amino-acid sequence, 186 residues long: Protein C (186 aa).

The segment covering 1 to 12 (MSKTDWNASGPS) has biased composition (polar residues). Positions 1–43 (MSKTDWNASGPSRPSPSAHWPSGKLWQHGQKYQTTQDRSRPPA) are disordered.

This sequence belongs to the morbillivirus protein C family. As to quaternary structure, interacts with the phosphoprotein (via C-terminus); this interaction allows C to associate with the ribonucleocapsid.

It is found in the host nucleus. Its subcellular location is the host cytoplasmic vesicle. Its function is as follows. Ribonucleocapsid-associated protein that interacts with the phosphoprotein (P), thereby increasing replication accuracy and processivity of the polymerase complex. The chain is Protein C (P/V/C) from Homo sapiens (Human).